A 100-amino-acid chain; its full sequence is Toxin ParE3 (100 aa).

This sequence belongs to the RelE toxin family.

In terms of biological role, toxic component of a type II toxin-antitoxin (TA) system. Its toxic effect is neutralized by coexpression with cognate antitoxin ParD3 but no other ParD or RelB antitoxin. The protein is Toxin ParE3 (parE3) of Caulobacter vibrioides (strain ATCC 19089 / CIP 103742 / CB 15) (Caulobacter crescentus).